The sequence spans 335 residues: Mitochondrial thiamine diphosphate carrier 1 (335 aa).

The next 6 helical transmembrane spans lie at 13 to 29 (KRAV…GAIS), 88 to 105 (VPAL…FAVL), 127 to 150 (YLSY…FDLL), 182 to 199 (LYAG…YAGL), 231 to 247 (SLSS…SGTV), and 304 to 323 (GIVP…FVAY). Solcar repeat units lie at residues 13-111 (KRAV…VKSF), 124-210 (LSPY…FKRW), and 232-329 (LSSF…ASDW).

This sequence belongs to the mitochondrial carrier (TC 2.A.29) family.

It localises to the mitochondrion inner membrane. Mitochondrial transporter that mediates uptake of thiamine diphosphate (ThDP) into mitochondria. The polypeptide is Mitochondrial thiamine diphosphate carrier 1 (Arabidopsis thaliana (Mouse-ear cress)).